Here is a 210-residue protein sequence, read N- to C-terminus: LexA repressor (210 aa).

Residues 28-48 constitute a DNA-binding region (H-T-H motif); that stretch reads FEEIAEGMGLSSLATVHKHIG. Active-site for autocatalytic cleavage activity residues include Ser131 and Lys169.

It belongs to the peptidase S24 family. In terms of assembly, homodimer.

The enzyme catalyses Hydrolysis of Ala-|-Gly bond in repressor LexA.. Represses a number of genes involved in the response to DNA damage (SOS response), including recA and lexA. In the presence of single-stranded DNA, RecA interacts with LexA causing an autocatalytic cleavage which disrupts the DNA-binding part of LexA, leading to derepression of the SOS regulon and eventually DNA repair. The protein is LexA repressor of Koribacter versatilis (strain Ellin345).